The chain runs to 339 residues: Annexin A2 (339 aa).

Serine 2 carries the post-translational modification N-acetylserine. Residues 2–24 (STVHEILCKLSLEGDHSTPPSAY) are S100A10-binding site. Tyrosine 24 is modified (phosphotyrosine; by SRC). Serine 26 bears the Phosphoserine; by PKC mark. 2 Annexin repeats span residues 33-104 (FDAE…GLLK) and 105-176 (TPAQ…ALAK). Lysine 49 carries the N6-acetyllysine; alternate modification. Lysine 49 is covalently cross-linked (Glycyl lysine isopeptide (Lys-Gly) (interchain with G-Cter in SUMO1); alternate). Lysine 49 participates in a covalent cross-link: Glycyl lysine isopeptide (Lys-Gly) (interchain with G-Cter in SUMO2); alternate. Lysine 152 is subject to N6-acetyllysine. Position 184 is a phosphoserine (serine 184). Annexin repeat units follow at residues 189–261 (ELID…NLVQ) and 265–336 (NKPL…YLCG). Tyrosine 199 is subject to Phosphotyrosine. N6-acetyllysine is present on lysine 227.

This sequence belongs to the annexin family. As to quaternary structure, heterotetramer containing 2 light chains of S100A10/p11 and 2 heavy chains of ANXA2/p36. Interacts with ATP1B1. Interacts with DYSF. Interacts with COCH. Interacts (via repeat Annexin 1) with PCSK9 (via the C-terminal domain); the interaction inhibits the degradation of LDLR. Interacts with CEACAM1 (via the cytoplasmic domain); this interaction is regulated by phosphorylation of CEACAM1. Interacts with APPL2 and APPL1; targets APPL2 to endosomes and acting in parallel to RAB5A. Interacts with S100A4. May interact with UBAP2. Interacts with PLEKHG4B; this interaction is required for PLEKHG4B localization to cell-cell adhesions. (Microbial infection) Interacts with human cytomegalovirus (HCMV). In terms of assembly, (Microbial infection) Interacts with M.pneumoniae CARDS toxin; CARDS probably uses this protein as a receptor. A portion of internalized CARDS remains associated with intracellular annexin 2. Phosphorylation of Tyr-24 enhances heat stress-induced translocation to the cell surface. In terms of processing, ISGylated.

It is found in the secreted. It localises to the extracellular space. The protein localises to the extracellular matrix. The protein resides in the basement membrane. Its subcellular location is the melanosome. Calcium-regulated membrane-binding protein whose affinity for calcium is greatly enhanced by anionic phospholipids. It binds two calcium ions with high affinity. May be involved in heat-stress response. Inhibits PCSK9-enhanced LDLR degradation, probably reduces PCSK9 protein levels via a translational mechanism but also competes with LDLR for binding with PCSK9. Binds to endosomes damaged by phagocytosis of particulate wear debris and participates in endosomal membrane stabilization, thereby limiting NLRP3 inflammasome activation. Required for endothelial cell surface plasmin generation and may support fibrinolytic surveillance and neoangiogenesis. Functionally, (Microbial infection) Binds M.pneumoniae CARDS toxin, probably serves as one receptor for this pathogen. When ANXA2 is down-regulated by siRNA, less toxin binds to human cells and less vacuolization (a symptom of M.pneumoniae infection) is seen. The polypeptide is Annexin A2 (ANXA2) (Homo sapiens (Human)).